Consider the following 258-residue polypeptide: Cytochrome c oxidase subunit 2 (258 aa).

Residues 1 to 41 are Mitochondrial intermembrane-facing; it reads MIVNECLFFTIALCDAAEPWQLGFQDAATPMMQGIIDLHHD. A helical transmembrane segment spans residues 42-58; that stretch reads ILFFLILILVFVLWILV. The Mitochondrial matrix portion of the chain corresponds to 59–82; it reads RALWHFYYKKNPIPQRIVHGTTIE. Residues 83-104 traverse the membrane as a helical segment; sequence ILWTIFPSIILMFIAIPSFALL. The Mitochondrial intermembrane portion of the chain corresponds to 105-258; that stretch reads YSMDEVVVDP…VSNLFIPPTS (154 aa). Residues His-187, Cys-222, Glu-224, Cys-226, His-230, and Met-233 each contribute to the Cu cation site. Glu-224 lines the Mg(2+) pocket.

It belongs to the cytochrome c oxidase subunit 2 family. Component of the cytochrome c oxidase (complex IV, CIV), a multisubunit enzyme composed of a catalytic core of 3 subunits and several supernumerary subunits. The complex exists as a monomer or a dimer and forms supercomplexes (SCs) in the inner mitochondrial membrane with ubiquinol-cytochrome c oxidoreductase (cytochrome b-c1 complex, complex III, CIII). Cu cation serves as cofactor.

It is found in the mitochondrion inner membrane. It catalyses the reaction 4 Fe(II)-[cytochrome c] + O2 + 8 H(+)(in) = 4 Fe(III)-[cytochrome c] + 2 H2O + 4 H(+)(out). Its function is as follows. Component of the cytochrome c oxidase, the last enzyme in the mitochondrial electron transport chain which drives oxidative phosphorylation. The respiratory chain contains 3 multisubunit complexes succinate dehydrogenase (complex II, CII), ubiquinol-cytochrome c oxidoreductase (cytochrome b-c1 complex, complex III, CIII) and cytochrome c oxidase (complex IV, CIV), that cooperate to transfer electrons derived from NADH and succinate to molecular oxygen, creating an electrochemical gradient over the inner membrane that drives transmembrane transport and the ATP synthase. Cytochrome c oxidase is the component of the respiratory chain that catalyzes the reduction of oxygen to water. Electrons originating from reduced cytochrome c in the intermembrane space (IMS) are transferred via the dinuclear copper A center (CU(A)) of subunit 2 and heme A of subunit 1 to the active site in subunit 1, a binuclear center (BNC) formed by heme A3 and copper B (CU(B)). The BNC reduces molecular oxygen to 2 water molecules using 4 electrons from cytochrome c in the IMS and 4 protons from the mitochondrial matrix. This is Cytochrome c oxidase subunit 2 (COX2) from Oenothera berteroana (Bertero's evening primrose).